The chain runs to 431 residues: Probable carboxylic ester hydrolase LipM (431 aa).

3 consecutive transmembrane segments (helical) span residues 7 to 27 (IHVI…AATI), 38 to 58 (FASL…LPTL), and 75 to 95 (PVRA…LNLS). Active-site residues include S261, D357, and H390.

This sequence belongs to the 'GDXG' lipolytic enzyme family.

It localises to the membrane. The sequence is that of Probable carboxylic ester hydrolase LipM from Mycobacterium tuberculosis (strain ATCC 25618 / H37Rv).